The sequence spans 189 residues: MAQNGSEGPLLAGVAGRYALALYELARDEGQVDDVAKNLDAFDALYRESADLRRLVKSPAFSAEEQTAAVGALLDRAGISGLAANFIKLSAANRRLFALPDMIRAYREKVREAKGIVRAEVRVAEKPSDAVIEDIKASLRDVAKSEVDIDLHIDPSLIGGIVVKMGSRMVDASLRTKLNSIRLAMREAR.

The protein belongs to the ATPase delta chain family. F-type ATPases have 2 components, F(1) - the catalytic core - and F(0) - the membrane proton channel. F(1) has five subunits: alpha(3), beta(3), gamma(1), delta(1), epsilon(1). F(0) has three main subunits: a(1), b(2) and c(10-14). The alpha and beta chains form an alternating ring which encloses part of the gamma chain. F(1) is attached to F(0) by a central stalk formed by the gamma and epsilon chains, while a peripheral stalk is formed by the delta and b chains.

It localises to the cell inner membrane. In terms of biological role, f(1)F(0) ATP synthase produces ATP from ADP in the presence of a proton or sodium gradient. F-type ATPases consist of two structural domains, F(1) containing the extramembraneous catalytic core and F(0) containing the membrane proton channel, linked together by a central stalk and a peripheral stalk. During catalysis, ATP synthesis in the catalytic domain of F(1) is coupled via a rotary mechanism of the central stalk subunits to proton translocation. This protein is part of the stalk that links CF(0) to CF(1). It either transmits conformational changes from CF(0) to CF(1) or is implicated in proton conduction. The protein is ATP synthase subunit delta of Methylorubrum populi (strain ATCC BAA-705 / NCIMB 13946 / BJ001) (Methylobacterium populi).